The following is a 98-amino-acid chain: UPF0473 protein lp_2273 (98 aa).

It belongs to the UPF0473 family.

This is UPF0473 protein lp_2273 from Lactiplantibacillus plantarum (strain ATCC BAA-793 / NCIMB 8826 / WCFS1) (Lactobacillus plantarum).